The primary structure comprises 324 residues: Beta-ketoacyl-[acyl-carrier-protein] synthase III (324 aa).

Residues cysteine 111 and histidine 251 contribute to the active site. Positions 252 to 256 (QANTR) are ACP-binding. Asparagine 281 is an active-site residue.

Belongs to the thiolase-like superfamily. FabH family. Homodimer.

It is found in the plastid. The protein resides in the chloroplast. It carries out the reaction malonyl-[ACP] + acetyl-CoA + H(+) = 3-oxobutanoyl-[ACP] + CO2 + CoA. Its pathway is lipid metabolism; fatty acid biosynthesis. Catalyzes the condensation reaction of fatty acid synthesis by the addition to an acyl acceptor of two carbons from malonyl-ACP. Catalyzes the first condensation reaction which initiates fatty acid synthesis and may therefore play a role in governing the total rate of fatty acid production. Possesses both acetoacetyl-ACP synthase and acetyl transacylase activities. Its substrate specificity determines the biosynthesis of branched-chain and/or straight-chain of fatty acids. This chain is Beta-ketoacyl-[acyl-carrier-protein] synthase III, found in Pyropia yezoensis (Susabi-nori).